The chain runs to 158 residues: Trafficking protein particle complex subunit 6B (158 aa).

The protein belongs to the TRAPP small subunits family. BET3 subfamily. In terms of assembly, homodimer. Part of a TRAPP complex. Heterodimer with TRAPPC3. The heterodimer TRAPPC6B-TRAPPC3 interacts with TRAPPC1 likely providing a core for TRAPP complex formation. In terms of tissue distribution, widely expressed. Expressed in lung, heart, liver, spleen, brain and kidney.

It localises to the golgi apparatus. It is found in the cis-Golgi network. The protein localises to the endoplasmic reticulum. Component of a transport protein particle (TRAPP) complex that may function in specific stages of inter-organelle traffic. Specifically involved in the early development of neural circuitry, likely by controlling the frequency and amplitude of intracellular calcium transients implicated in the regulation of neuron differentiation and survival. This chain is Trafficking protein particle complex subunit 6B, found in Mus musculus (Mouse).